The following is a 251-amino-acid chain: Esterase mlcF (251 aa).

Active-site charge relay system residues include serine 126, aspartate 193, and histidine 221.

This sequence belongs to the LovG family.

The enzyme catalyses dihydro-ML-236C-[compactin nonaketide synthase] + H2O = holo-[compactin nonaketide synthase] + dihydro-ML-236C carboxylate + H(+). The protein operates within polyketide biosynthesis. Esterase; part of the gene cluster that mediates the biosynthesis of compactin, also known as mevastatin or ML-236B, and which acts as a potent competitive inhibitor of HMG-CoA reductase. Compactin biosynthesis is performed in two stages. The first stage is catalyzed by the nonaketide synthase mlcA, which belongs to type I polyketide synthases and catalyzes the iterative nine-step formation of the polyketide. This PKS stage is completed by the action of dehydrogenase mlcG, which catalyzes the NADPH-dependent reduction of the unsaturated tetra-, penta- and heptaketide intermediates that arise during the mlcA-mediated biosynthesis of the nonaketide chain and leads to dihydro-ML-236C carboxylate. Covalently bound dihydro-ML-236C carboxylate is released from mlcA by the mlcF esterase. Conversion of dihydro-ML-236C carboxylate into ML-236A carboxylate is subsequently performed with the participation of molecular oxygen and P450 monoogygenase mlcC. Finally, mlcH performs the conversion of ML-236A carboxylate to ML-236B/compactin carboxylate through the addition of the side-chain diketide moiety produced by the diketide synthase mlcB. The polypeptide is Esterase mlcF (Penicillium citrinum).